The following is a 328-amino-acid chain: Ribosomal protein L11 methyltransferase (328 aa).

4 residues coordinate S-adenosyl-L-methionine: Thr158, Gly180, Asp202, and Asn246.

The protein belongs to the methyltransferase superfamily. PrmA family.

Its subcellular location is the cytoplasm. It catalyses the reaction L-lysyl-[protein] + 3 S-adenosyl-L-methionine = N(6),N(6),N(6)-trimethyl-L-lysyl-[protein] + 3 S-adenosyl-L-homocysteine + 3 H(+). Its function is as follows. Methylates ribosomal protein L11. This Polynucleobacter necessarius subsp. necessarius (strain STIR1) protein is Ribosomal protein L11 methyltransferase.